We begin with the raw amino-acid sequence, 28 residues long: uncharacterized protein (28 aa).

Residues 1 to 18 (MLPRKYKPAYKKQAHRVK) show a composition bias toward basic residues. Positions 1–28 (MLPRKYKPAYKKQAHRVKSNPQPAYTFQ) are disordered. Residues 19 to 28 (SNPQPAYTFQ) show a composition bias toward polar residues.

This is an uncharacterized protein from Saccharomyces cerevisiae (strain ATCC 204508 / S288c) (Baker's yeast).